The chain runs to 424 residues: Glutamate-1-semialdehyde 2,1-aminomutase (424 aa).

Lys-264 is modified (N6-(pyridoxal phosphate)lysine).

The protein belongs to the class-III pyridoxal-phosphate-dependent aminotransferase family. HemL subfamily. Homodimer. It depends on pyridoxal 5'-phosphate as a cofactor.

The protein localises to the cytoplasm. The enzyme catalyses (S)-4-amino-5-oxopentanoate = 5-aminolevulinate. It functions in the pathway porphyrin-containing compound metabolism; protoporphyrin-IX biosynthesis; 5-aminolevulinate from L-glutamyl-tRNA(Glu): step 2/2. This is Glutamate-1-semialdehyde 2,1-aminomutase (hemL) from Aquifex aeolicus (strain VF5).